The primary structure comprises 766 residues: Polyribonucleotide nucleotidyltransferase (766 aa).

Aspartate 490 and aspartate 496 together coordinate Mg(2+). The 60-residue stretch at 557–616 (PKIDTITIPVDKIKVVIGKGGEQIDKIIAETGVKIDIDDEGLCSIFSSDQSAIDRAKEII) folds into the KH domain. The 69-residue stretch at 626 to 694 (GEVYEAKVVR…DKGRVDASMR (69 aa)) folds into the S1 motif domain. Basic and acidic residues-rich tracts occupy residues 700–734 (PEGY…DRNN) and 744–766 (FELR…KKPE). The interval 700-766 (PEGYVEPERK…FPELSTKKPE (67 aa)) is disordered.

Belongs to the polyribonucleotide nucleotidyltransferase family. Mg(2+) is required as a cofactor.

Its subcellular location is the cytoplasm. The enzyme catalyses RNA(n+1) + phosphate = RNA(n) + a ribonucleoside 5'-diphosphate. In terms of biological role, involved in mRNA degradation. Catalyzes the phosphorolysis of single-stranded polyribonucleotides processively in the 3'- to 5'-direction. This Lactococcus lactis subsp. cremoris (strain MG1363) protein is Polyribonucleotide nucleotidyltransferase.